The following is a 247-amino-acid chain: ATP synthase subunit a 1 (247 aa).

6 consecutive transmembrane segments (helical) span residues 32–52, 82–102, 112–132, 141–161, 181–201, and 206–226; these read YMLL…RALV, FFPL…VGII, IIVT…YGFY, LFVP…IEII, GHVT…LGFV, and ALLP…VAFL.

This sequence belongs to the ATPase A chain family. F-type ATPases have 2 components, CF(1) - the catalytic core - and CF(0) - the membrane proton channel. CF(1) has five subunits: alpha(3), beta(3), gamma(1), delta(1), epsilon(1). CF(0) has four main subunits: a, b, b' and c.

The protein resides in the cell inner membrane. Functionally, key component of the proton channel; it plays a direct role in the translocation of protons across the membrane. This chain is ATP synthase subunit a 1, found in Bradyrhizobium sp. (strain BTAi1 / ATCC BAA-1182).